The chain runs to 364 residues: Dermonecrotic toxin SPH (364 aa).

Positions 1 to 17 are cleaved as a signal peptide; it reads MIRIFALITALAITVKC. His29 acts as the Nucleophile in catalysis. 2 residues coordinate Mg(2+): Glu49 and Asp51. His65 is a catalytic residue. Disulfide bonds link Cys69-Cys75 and Cys71-Cys215. Asp109 contacts Mg(2+).

Belongs to the arthropod phospholipase D family. The cofactor is Mg(2+). In terms of tissue distribution, expressed in salivary glands.

Its subcellular location is the secreted. The enzyme catalyses an N-(acyl)-sphingosylphosphocholine = an N-(acyl)-sphingosyl-1,3-cyclic phosphate + choline. It catalyses the reaction an N-(acyl)-sphingosylphosphoethanolamine = an N-(acyl)-sphingosyl-1,3-cyclic phosphate + ethanolamine. It carries out the reaction a 1-acyl-sn-glycero-3-phosphocholine = a 1-acyl-sn-glycero-2,3-cyclic phosphate + choline. The catalysed reaction is a 1-acyl-sn-glycero-3-phosphoethanolamine = a 1-acyl-sn-glycero-2,3-cyclic phosphate + ethanolamine. Functionally, dermonecrotic toxins cleave the phosphodiester linkage between the phosphate and headgroup of certain phospholipids (sphingolipid and lysolipid substrates), forming an alcohol (often choline) and a cyclic phosphate. Acts on sphingomyelin (SM). It may also act on ceramide phosphoethanolamine (CPE), lysophosphatidylcholine (LPC) and lysophosphatidylethanolamine (LPE), but not on lysophosphatidylserine (LPS), and lysophosphatidylglycerol (LPG). It acts by transphosphatidylation, releasing exclusively cyclic phosphate products as second products. Induces dermonecrosis, hemolysis, increased vascular permeability, edema, inflammatory response, and platelet aggregation. The polypeptide is Dermonecrotic toxin SPH (SPH) (Ixodes scapularis (Black-legged tick)).